The sequence spans 209 residues: Xanthine phosphoribosyltransferase 1 (209 aa).

Residue Ser79 is modified to Phosphoserine.

It is found in the cytoplasm. May act as a xanthine phosphoribosyltransferase involved in the synthesis of purine nucleotides. Such activity is however unclear in vivo. This is Xanthine phosphoribosyltransferase 1 (XPT1) from Saccharomyces cerevisiae (strain ATCC 204508 / S288c) (Baker's yeast).